The following is a 970-amino-acid chain: Type III restriction-modification enzyme EcoPI Res subunit (970 aa).

Residues alanine 75–valine 540 are helicase-like domain. Residues threonine 894–lysine 918 are endonuclease domain.

Belongs to the type III restriction-modification system Res protein family. As to quaternary structure, a heterotetramer with stoichiometry Res(2)Mod(2). The cofactor is Mg(2+). Requires S-adenosyl-L-methionine as cofactor.

The enzyme catalyses Endonucleolytic cleavage of DNA to give specific double-stranded fragments with terminal 5'-phosphates.. In terms of biological role, a type III restriction enzyme that recognizes 2 inversely oriented double-stranded sequences 5'-AGACC-3' and cleaves DNA 25-27 base pairs downstream of one site, producing a single-strand 5' protrusion of two nucleotides. DNA restriction requires both the Res and Mod subunits. DNA topology affects its action; relaxed and negatively supercoiled DNA are digested but positively supercoiled DNA is not a good substrate. After binding to one recognition site undergoes random one-dimensional diffusion along DNA until it collides with a stationary enzyme bound to the second DNA site, which is when DNA cleavage occurs. The protein is Type III restriction-modification enzyme EcoPI Res subunit of Enterobacteriaceae (Bacteriophage P1).